The following is a 445-amino-acid chain: DNA polymerase IV (445 aa).

Positions 49 to 229 constitute a UmuC domain; the sequence is LAHVDCDAFY…KPVGMIWGVG (181 aa). Mg(2+) is bound by residues aspartate 53 and aspartate 146. Residue glutamate 147 is part of the active site.

This sequence belongs to the DNA polymerase type-Y family. As to quaternary structure, monomer. Mg(2+) serves as cofactor.

The protein localises to the cytoplasm. The catalysed reaction is DNA(n) + a 2'-deoxyribonucleoside 5'-triphosphate = DNA(n+1) + diphosphate. Functionally, poorly processive, error-prone DNA polymerase involved in untargeted mutagenesis. Copies undamaged DNA at stalled replication forks, which arise in vivo from mismatched or misaligned primer ends. These misaligned primers can be extended by PolIV. Exhibits no 3'-5' exonuclease (proofreading) activity. May be involved in translesional synthesis, in conjunction with the beta clamp from PolIII. The protein is DNA polymerase IV of Brucella melitensis biotype 1 (strain ATCC 23456 / CCUG 17765 / NCTC 10094 / 16M).